Consider the following 404-residue polypeptide: Lipase lipl-3 (404 aa).

Positions 1-20 are cleaved as a signal peptide; the sequence is MCSSLCALLLVILAVHNVHA. The N-linked (GlcNAc...) asparagine glycan is linked to asparagine 65. Serine 168 (nucleophile) is an active-site residue. Asparagine 272 is a glycosylation site (N-linked (GlcNAc...) asparagine). Catalysis depends on charge relay system residues aspartate 344 and histidine 376.

The protein belongs to the AB hydrolase superfamily. Lipase family.

The protein resides in the secreted. It is found in the lysosome lumen. In terms of biological role, lipase that, together with lipl-1, plays a role in the response to nutrient deprivation by controlling lipid metabolism. Specifically, involved in the breakdown of lipids during lipophagy, a process during which lipids contained in lipid droplets that have been delivered to lysosomes by autophagy are degraded. In Caenorhabditis elegans, this protein is Lipase lipl-3.